Reading from the N-terminus, the 1410-residue chain is Pogo transposable element with ZNF domain (1410 aa).

The segment at 238–291 (RSTVPQSQSQQTKSTPSTSTTPTATQPTSLGQLAVQSPGQSNQTTNPKLAPSFP) is disordered. Over residues 239-266 (STVPQSQSQQTKSTPSTSTTPTATQPTS) the composition is skewed to low complexity. Positions 267–284 (LGQLAVQSPGQSNQTTNP) are enriched in polar residues. Lys-319 participates in a covalent cross-link: Glycyl lysine isopeptide (Lys-Gly) (interchain with G-Cter in SUMO2). A disordered region spans residues 332 to 361 (QSPGPVVVSNNSSAHGSQRTSGPESSMKVT). Residue Ser-333 is modified to Phosphoserine. A compositionally biased stretch (polar residues) spans 345–361 (AHGSQRTSGPESSMKVT). A Glycyl lysine isopeptide (Lys-Gly) (interchain with G-Cter in SUMO2) cross-link involves residue Lys-359. At Ser-363 the chain carries Phosphoserine. The C2H2-type 1; atypical zinc-finger motif lies at 375 to 397 (KICPRCNAQFRVTEALRGHMCYC). The tract at residues 409 to 456 (KSLDSEPSVPSAAKPPSPEKTAPVASTPSSTPIPALSPPTKVPEPNEN) is disordered. A Glycyl lysine isopeptide (Lys-Gly) (interchain with G-Cter in SUMO2) cross-link involves residue Lys-422. Position 425 is a phosphoserine (Ser-425). Position 439 is a phosphothreonine (Thr-439). Position 445 is a phosphoserine (Ser-445). Residue Lys-449 forms a Glycyl lysine isopeptide (Lys-Gly) (interchain with G-Cter in SUMO2) linkage. Thr-463 is modified (phosphothreonine). Lys-489 is covalently cross-linked (Glycyl lysine isopeptide (Lys-Gly) (interchain with G-Cter in SUMO2)). C2H2-type zinc fingers lie at residues 494–516 (FRCP…MKHH), 530–553 (TICQ…ENVH), 560–583 (TKCK…KDTH), 590–613 (YVCQ…RMIH), 619–641 (LLCP…YMRH), and 647–670 (YHCN…LQHH). Residue Lys-629 forms a Glycyl lysine isopeptide (Lys-Gly) (interchain with G-Cter in SUMO2) linkage. Residue Lys-677 forms a Glycyl lysine isopeptide (Lys-Gly) (interchain with G-Cter in SUMO2) linkage. The tract at residues 693–715 (SRGQPRTVPVSSNDTPPSALQEA) is disordered. Residues 701–710 (PVSSNDTPPS) are compositionally biased toward polar residues. The C2H2-type 8 zinc finger occupies 771-794 (VHCSLCRYSTCCSRAYANHMINNH). Lys-801 is covalently cross-linked (Glycyl lysine isopeptide (Lys-Gly) (interchain with G-Cter in SUMO2)). A required for interaction with CBX5 region spans residues 810-850 (VSGIKLACTSCTFVTSVGDAMAKHLVFNPSHRSSSILPRGL). The C2H2-type 9 zinc finger occupies 815–840 (LACTSCTFVTSVGDAMAKHLVFNPSH). Residue Ser-856 is modified to Phosphoserine. Disordered stretches follow at residues 857 to 927 (RHGQ…PQAL) and 942 to 969 (VDDQ…GVGK). Residues 860-870 (QTRDRVHDRNV) show a composition bias toward basic and acidic residues. Residue Lys-883 forms a Glycyl lysine isopeptide (Lys-Gly) (interchain with G-Cter in SUMO2) linkage. Residues 892–915 (ATPAEPEELLTPLAPALPSPASTA) show a composition bias toward low complexity. The HTH CENPB-type domain occupies 1015–1085 (GENLEGKYLS…MLRHHLTPHA (71 aa)). One can recognise a DDE-1 domain in the interval 1117–1323 (LPLSMIVAID…DCPELVQRSF (207 aa)). The residue at position 1338 (Ser-1338) is a Phosphoserine. Positions 1340 to 1360 (TRNADMQEELIASLEEQLKLS) form a coiled coil. Residues 1360 to 1400 (SGEHSESSTPRPRSSPEETIEPESLHQLFEGESETESFYGF) are disordered. Residues Ser-1364 and Ser-1367 each carry the phosphoserine modification. Phosphothreonine is present on Thr-1368. A phosphoserine mark is found at Ser-1373 and Ser-1374. Position 1378 is a phosphothreonine (Thr-1378). Residues 1380–1404 (EPESLHQLFEGESETESFYGFEEAD) carry the Integrase domain-binding motif (IBM) motif. Ser-1392 is subject to Phosphoserine; by CK2. Position 1394 is a phosphothreonine (Thr-1394). Ser-1396 is subject to Phosphoserine; by CK2.

As to quaternary structure, interacts with CBX1, CBX3, MAD2L2 and CHAMP1. Interacts with CBX5; POGZ competes with PXVXL motif-containing proteins such as INCENP and TRIM28 for interaction with CBX5. Interacts (via IBM motif) with PSIP1 isoform 1 (via IBD domain); phosphorylation increases its affinity for PSIP1. Interacts with HDGFL2. In terms of processing, phosphorylation increases its interaction with PSIP1.

It localises to the nucleus. Its subcellular location is the chromosome. The protein resides in the cytoplasm. Its function is as follows. Plays a role in mitotic cell cycle progression and is involved in kinetochore assembly and mitotic sister chromatid cohesion. Probably through its association with CBX5 plays a role in mitotic chromosome segregation by regulating aurora kinase B/AURKB activation and AURKB and CBX5 dissociation from chromosome arms. Promotes the repair of DNA double-strand breaks through the homologous recombination pathway. The protein is Pogo transposable element with ZNF domain (POGZ) of Homo sapiens (Human).